Consider the following 250-residue polypeptide: DNA polymerase sliding clamp (250 aa).

Belongs to the PCNA family. As to quaternary structure, homotrimer. The subunits circularize to form a toroid; DNA passes through its center. Replication factor C (RFC) is required to load the toroid on the DNA.

In terms of biological role, sliding clamp subunit that acts as a moving platform for DNA processing. Responsible for tethering the catalytic subunit of DNA polymerase and other proteins to DNA during high-speed replication. In Methanococcus maripaludis (strain C7 / ATCC BAA-1331), this protein is DNA polymerase sliding clamp.